A 481-amino-acid polypeptide reads, in one-letter code: Cobyric acid synthase (481 aa).

The region spanning 247–433 is the GATase cobBQ-type domain; the sequence is AFNVVVPLLP…LHGLFDVPDS (187 aa). C328 functions as the Nucleophile in the catalytic mechanism. H425 is an active-site residue.

It belongs to the CobB/CobQ family. CobQ subfamily.

The protein operates within cofactor biosynthesis; adenosylcobalamin biosynthesis. Its function is as follows. Catalyzes amidations at positions B, D, E, and G on adenosylcobyrinic A,C-diamide. NH(2) groups are provided by glutamine, and one molecule of ATP is hydrogenolyzed for each amidation. The chain is Cobyric acid synthase from Alcanivorax borkumensis (strain ATCC 700651 / DSM 11573 / NCIMB 13689 / SK2).